Reading from the N-terminus, the 111-residue chain is MAGRPAVSASSRWLEGIRKWYYNAAGFNKLGLMRDDTIHENDDVKEAIRRLPENLYNDRVFRIKRALDLSMRQQILPKEQWTKYEEDKSYLEPYLKEVIRERKEREEWAKK.

The residue at position 2 (alanine 2) is an N-acetylalanine. The residue at position 19 (lysine 19) is an N6-acetyllysine. Lysine 78 bears the N6-acetyllysine; alternate mark. Lysine 78 is modified (N6-succinyllysine; alternate). Lysine 83 is subject to N6-acetyllysine. At lysine 88 the chain carries N6-acetyllysine; alternate. Lysine 88 bears the N6-succinyllysine; alternate mark. At lysine 96 the chain carries N6-acetyllysine.

It belongs to the UQCRB/QCR7 family. Component of the ubiquinol-cytochrome c oxidoreductase (cytochrome b-c1 complex, complex III, CIII), a multisubunit enzyme composed of 11 subunits. The complex is composed of 3 respiratory subunits cytochrome b, cytochrome c1 and Rieske protein UQCRFS1, 2 core protein subunits UQCRC1/QCR1 and UQCRC2/QCR2, and 6 low-molecular weight protein subunits UQCRH/QCR6, UQCRB/QCR7, UQCRQ/QCR8, UQCR10/QCR9, UQCR11/QCR10 and subunit 9, the cleavage product of Rieske protein UQCRFS1. The complex exists as an obligatory dimer and forms supercomplexes (SCs) in the inner mitochondrial membrane with NADH-ubiquinone oxidoreductase (complex I, CI) and cytochrome c oxidase (complex IV, CIV), resulting in different assemblies (supercomplex SCI(1)III(2)IV(1) and megacomplex MCI(2)III(2)IV(2)).

The protein resides in the mitochondrion inner membrane. Its function is as follows. Component of the ubiquinol-cytochrome c oxidoreductase, a multisubunit transmembrane complex that is part of the mitochondrial electron transport chain which drives oxidative phosphorylation. The respiratory chain contains 3 multisubunit complexes succinate dehydrogenase (complex II, CII), ubiquinol-cytochrome c oxidoreductase (cytochrome b-c1 complex, complex III, CIII) and cytochrome c oxidase (complex IV, CIV), that cooperate to transfer electrons derived from NADH and succinate to molecular oxygen, creating an electrochemical gradient over the inner membrane that drives transmembrane transport and the ATP synthase. The cytochrome b-c1 complex catalyzes electron transfer from ubiquinol to cytochrome c, linking this redox reaction to translocation of protons across the mitochondrial inner membrane, with protons being carried across the membrane as hydrogens on the quinol. In the process called Q cycle, 2 protons are consumed from the matrix, 4 protons are released into the intermembrane space and 2 electrons are passed to cytochrome c. This Bos taurus (Bovine) protein is Cytochrome b-c1 complex subunit 7 (UQCRB).